Here is a 344-residue protein sequence, read N- to C-terminus: Sorting nexin-16 (344 aa).

The span at 1–10 (MATPYVPVPM) shows a compositional bias: pro residues. A disordered region spans residues 1-72 (MATPYVPVPM…SASSMCGSPL (72 aa)). Residues 14–26 (NSASSFTNNRNQR) show a composition bias toward polar residues. A compositionally biased stretch (low complexity) spans 27 to 40 (SSSFGSVSTSSTSS). Residues 52-68 (LKQTNVQDQMDSASSMC) are compositionally biased toward polar residues. One can recognise a PX domain in the interval 105–218 (DRPSTPTILG…EFLCLDDPPG (114 aa)). A 1,2-diacyl-sn-glycero-3-phospho-(1D-myo-inositol-3-phosphate) is bound by residues Arg-144, Thr-146, and Arg-184. The residue at position 222 (Ser-222) is a Phosphoserine. Residues 223-278 (LEESRAFCETLEETNYHLQRELLEKQKEVESLKKLLGEKQLHIDALETRIRTLSLE) adopt a coiled-coil conformation.

The protein belongs to the sorting nexin family. In terms of assembly, homooligomer. Interacts with EGFR.

The protein localises to the early endosome membrane. Its subcellular location is the late endosome membrane. It is found in the cytoplasm. It localises to the lysosome. Functionally, may be involved in several stages of intracellular trafficking. Plays a role in protein transport from early to late endosomes. Plays a role in protein transport to the lysosome. Promotes degradation of EGFR after EGF signaling. This is Sorting nexin-16 (Snx16) from Mus musculus (Mouse).